The primary structure comprises 297 residues: MKELGRLITAMVTPFKTDGTVDYAQAQKLALGLLDSGSDGLVVVGTTGESPTVTWEEEHALFAAVKSAVGNRGKVIAGTGANSTQEALENTLKAEKIGVDACLLVVPYYNKPTQEGLYLHFKTIAEATKLPCILYNVPSRTITHMNPETVIRLSQIPNIVGIKEASGKLDDIAQIINNVRPDFTVWSGNDSDTLPMLAMGSYGVISVASHLVGNQIKDMITSFVSGNTEHAAAIHRHLTPLIRSLFVVSNPIPIKYALNYLGFEVGGLRLPMTEADEKTAALIRESLRGYTIDLPIK.

Thr47 lines the pyruvate pocket. Tyr135 acts as the Proton donor/acceptor in catalysis. The Schiff-base intermediate with substrate role is filled by Lys163. Residue Ile205 coordinates pyruvate.

It belongs to the DapA family. As to quaternary structure, homotetramer; dimer of dimers.

The protein resides in the cytoplasm. The catalysed reaction is L-aspartate 4-semialdehyde + pyruvate = (2S,4S)-4-hydroxy-2,3,4,5-tetrahydrodipicolinate + H2O + H(+). Its pathway is amino-acid biosynthesis; L-lysine biosynthesis via DAP pathway; (S)-tetrahydrodipicolinate from L-aspartate: step 3/4. Catalyzes the condensation of (S)-aspartate-beta-semialdehyde [(S)-ASA] and pyruvate to 4-hydroxy-tetrahydrodipicolinate (HTPA). The protein is 4-hydroxy-tetrahydrodipicolinate synthase of Dehalococcoides mccartyi (strain CBDB1).